The chain runs to 539 residues: GMP synthase [glutamine-hydrolyzing] (539 aa).

The region spanning 20–215 is the Glutamine amidotransferase type-1 domain; the sequence is TILILDFGSQ…AIEICHAKPN (196 aa). The active-site Nucleophile is the C96. Residues H189 and E191 contribute to the active site. Residues 216–413 enclose the GMPS ATP-PPase domain; sequence WSMENFVDKE…LGIEHSLVWR (198 aa). Residue 244 to 250 coordinates ATP; sequence SGGVDST. Residues R317, D475, K531, and E537 each contribute to the XMP site.

As to quaternary structure, homodimer. The cofactor is Mg(2+).

The protein localises to the cytoplasm. Its subcellular location is the cytosol. It carries out the reaction XMP + L-glutamine + ATP + H2O = GMP + L-glutamate + AMP + diphosphate + 2 H(+). Its pathway is purine metabolism; GMP biosynthesis; GMP from XMP (L-Gln route): step 1/1. In terms of biological role, catalyzes the conversion of xanthine monophosphate (XMP) to GMP in the presence of glutamine and ATP through an adenyl-XMP intermediate. The sequence is that of GMP synthase [glutamine-hydrolyzing] from Schizosaccharomyces pombe (strain 972 / ATCC 24843) (Fission yeast).